Here is a 1440-residue protein sequence, read N- to C-terminus: Protein lin-15B (1440 aa).

Disordered regions lie at residues 1–22 (MQTL…SSSS), 48–67 (ILRH…HLDA), 618–660 (PKEE…GRPI), and 738–769 (KDEP…PSSY). Over residues 10 to 22 (TSNPASIPTSSSS) the composition is skewed to low complexity. Positions 631-646 (STSSPATSSPTIIRPR) are enriched in low complexity. Positions 757–767 (NRTTASSQGPS) are enriched in polar residues. The segment at 1135–1209 (NPGVCCFCSK…LLKGMIPDAA (75 aa)) adopts a THAP-type zinc-finger fold. Disordered regions lie at residues 1239–1281 (AIDL…EPSQ), 1298–1350 (RELS…GTSQ), and 1395–1440 (FADE…PSNE). Acidic residues predominate over residues 1254–1264 (TQEEEEEEEYE). A DNA-binding region (a.T hook 1) is located at residues 1317–1329 (PNPRGRPRKYPKN). Residues 1396-1407 (ADEEEEEEEYEE) are compositionally biased toward acidic residues. The a.T hook 2 DNA-binding region spans 1418-1430 (GRPVGRPRKDANK).

Its function is as follows. Synthetic multivulva (synMuv) class B protein. SynMuv proteins are required to repress the induction of vulval development. Acts redundantly with SynMuv class A protein lin-15A to negatively regulate vulval development. Regulates let-23 basal activity. This chain is Protein lin-15B, found in Caenorhabditis elegans.